The primary structure comprises 197 residues: Recombination protein RecR (197 aa).

The C4-type zinc-finger motif lies at 57-72 (CSVCFAITEDDPCWIC). The 96-residue stretch at 79 to 174 (GTICVVEEPQ…KVTRLAHGIP (96 aa)) folds into the Toprim domain.

Belongs to the RecR family.

Its function is as follows. May play a role in DNA repair. It seems to be involved in an RecBC-independent recombinational process of DNA repair. It may act with RecF and RecO. This chain is Recombination protein RecR, found in Geobacter sp. (strain M21).